Consider the following 538-residue polypeptide: Growth factor receptor-bound protein 14 (538 aa).

The disordered stretch occupies residues 1–20; the sequence is MTTSLQDGQSAAGRAGAQDS. Residue T2 is modified to N-acetylthreonine. Residues 104–190 enclose the Ras-associating domain; it reads KKQVIKVYSE…NKLYLRKNYA (87 aa). One can recognise a PH domain in the interval 232–340; sequence YPEIHGFLHA…WVTAIRLLKD (109 aa). 2 positions are modified to phosphoserine: S370 and S373. The region spanning 437 to 533 is the SH2 domain; it reads WFHHRISRDE…VLPCKLKHYC (97 aa).

The protein belongs to the GRB7/10/14 family. In terms of assembly, interacts with the cytoplasmic domain of the autophosphorylated insulin receptor, through the SH2 domain. Interacts with GRB14 (via BPS domain); this interaction protects the tyrosines in the activation loop on INSR from dephosphorylation. Binds to the ankyrin repeat region of TNKS2 via its N-terminus. Interacts with activated NRAS. Interacts (via SH2 domain) with TEK/TIE2 (tyrosine phosphorylated). Phosphorylated on serine residues. Phosphorylated on tyrosine residues by TEK/TIE2.

The protein resides in the cytoplasm. Its subcellular location is the endosome membrane. Functionally, adapter protein which modulates coupling of cell surface receptor kinases with specific signaling pathways. Binds to, and suppresses signals from, the activated insulin receptor (INSR). Potent inhibitor of insulin-stimulated MAPK3 phosphorylation. Plays a critical role regulating PDPK1 membrane translocation in response to insulin stimulation and serves as an adapter protein to recruit PDPK1 to activated insulin receptor, thus promoting PKB/AKT1 phosphorylation and transduction of the insulin signal. The polypeptide is Growth factor receptor-bound protein 14 (Grb14) (Mus musculus (Mouse)).